Reading from the N-terminus, the 549-residue chain is Glucose-6-phosphate isomerase (549 aa).

Residue Glu-353 is the Proton donor of the active site. Catalysis depends on residues His-384 and Lys-513.

The protein belongs to the GPI family.

The protein localises to the cytoplasm. It carries out the reaction alpha-D-glucose 6-phosphate = beta-D-fructose 6-phosphate. Its pathway is carbohydrate biosynthesis; gluconeogenesis. It participates in carbohydrate degradation; glycolysis; D-glyceraldehyde 3-phosphate and glycerone phosphate from D-glucose: step 2/4. Catalyzes the reversible isomerization of glucose-6-phosphate to fructose-6-phosphate. In Brucella anthropi (strain ATCC 49188 / DSM 6882 / CCUG 24695 / JCM 21032 / LMG 3331 / NBRC 15819 / NCTC 12168 / Alc 37) (Ochrobactrum anthropi), this protein is Glucose-6-phosphate isomerase.